The primary structure comprises 314 residues: Malate dehydrogenase (314 aa).

Residues 11-16 (GSGNIG) and D35 each bind NAD(+). The substrate site is built by R84 and R90. Residues N97 and 120 to 122 (ITN) contribute to the NAD(+) site. 2 residues coordinate substrate: N122 and R153. H177 functions as the Proton acceptor in the catalytic mechanism.

Belongs to the LDH/MDH superfamily. MDH type 3 family.

The enzyme catalyses (S)-malate + NAD(+) = oxaloacetate + NADH + H(+). Functionally, catalyzes the reversible oxidation of malate to oxaloacetate. The sequence is that of Malate dehydrogenase from Rickettsia conorii (strain ATCC VR-613 / Malish 7).